Consider the following 373-residue polypeptide: Queuine tRNA-ribosyltransferase (373 aa).

D89 serves as the catalytic Proton acceptor. Substrate contacts are provided by residues D89–F93, D143, Q187, and G214. The segment at G245 to D251 is RNA binding. The Nucleophile role is filled by D264. An RNA binding; important for wobble base 34 recognition region spans residues T269 to R273. The Zn(2+) site is built by C302, C304, C307, and H333.

It belongs to the queuine tRNA-ribosyltransferase family. In terms of assembly, homodimer. Within each dimer, one monomer is responsible for RNA recognition and catalysis, while the other monomer binds to the replacement base PreQ1. Zn(2+) serves as cofactor.

The enzyme catalyses 7-aminomethyl-7-carbaguanine + guanosine(34) in tRNA = 7-aminomethyl-7-carbaguanosine(34) in tRNA + guanine. The protein operates within tRNA modification; tRNA-queuosine biosynthesis. In terms of biological role, catalyzes the base-exchange of a guanine (G) residue with the queuine precursor 7-aminomethyl-7-deazaguanine (PreQ1) at position 34 (anticodon wobble position) in tRNAs with GU(N) anticodons (tRNA-Asp, -Asn, -His and -Tyr). Catalysis occurs through a double-displacement mechanism. The nucleophile active site attacks the C1' of nucleotide 34 to detach the guanine base from the RNA, forming a covalent enzyme-RNA intermediate. The proton acceptor active site deprotonates the incoming PreQ1, allowing a nucleophilic attack on the C1' of the ribose to form the product. After dissociation, two additional enzymatic reactions on the tRNA convert PreQ1 to queuine (Q), resulting in the hypermodified nucleoside queuosine (7-(((4,5-cis-dihydroxy-2-cyclopenten-1-yl)amino)methyl)-7-deazaguanosine). The polypeptide is Queuine tRNA-ribosyltransferase (Tolumonas auensis (strain DSM 9187 / NBRC 110442 / TA 4)).